Reading from the N-terminus, the 668-residue chain is Myb-like protein W (668 aa).

6 disordered regions span residues 57 to 124 (LDQF…NESV), 246 to 357 (EKEK…EEEV), 403 to 432 (KPKS…TDKG), 497 to 546 (YTNT…NKER), 561 to 583 (SMGR…TTTS), and 631 to 668 (QCEE…DEII). Residues 69 to 121 (NNNNNNNSNNNNNNNNNNNNNNNNNNNNNNNNNNNNNNNNNNYNNYNNNNNNN) show a composition bias toward low complexity. Residues 246–268 (EKEKRKKEREEREEREKQEKQEQ) show a composition bias toward basic and acidic residues. Residues 293–307 (NNKDNNHNGYYYYYD) show a composition bias toward low complexity. The segment covering 308–318 (NDNDNYNDGDD) has biased composition (acidic residues). The span at 319 to 335 (EKEKEKEKEKEKEKENE) shows a compositional bias: basic and acidic residues. A Myb-like domain is found at 344–398 (TSMVNSEEWTEEEVNKMNEIRGKLSTADYNYWDKVSAHVKSKTAEQCQRKYNSRF). The segment covering 501–542 (NNNNNNNNNNNNNNNNNNNNNNNNNNNNNNNNNNNNNNNNNN) has biased composition (low complexity). The segment covering 632 to 641 (CEERKKKEDR) has biased composition (basic and acidic residues). A compositionally biased stretch (acidic residues) spans 642-651 (DVDEDGEDDY).

In Dictyostelium discoideum (Social amoeba), this protein is Myb-like protein W (mybW).